The primary structure comprises 277 residues: Pantothenate synthetase (277 aa).

26–33 is a binding site for ATP; that stretch reads MGNLHAGH. Catalysis depends on His33, which acts as the Proton donor. Position 57 (Gln57) interacts with (R)-pantoate. A beta-alanine-binding site is contributed by Gln57. ATP is bound at residue 143 to 146; the sequence is GEKD. Gln149 contacts (R)-pantoate. Residues Val172 and 180–183 contribute to the ATP site; that span reads LSSR.

This sequence belongs to the pantothenate synthetase family. In terms of assembly, homodimer.

Its subcellular location is the cytoplasm. The enzyme catalyses (R)-pantoate + beta-alanine + ATP = (R)-pantothenate + AMP + diphosphate + H(+). It participates in cofactor biosynthesis; (R)-pantothenate biosynthesis; (R)-pantothenate from (R)-pantoate and beta-alanine: step 1/1. In terms of biological role, catalyzes the condensation of pantoate with beta-alanine in an ATP-dependent reaction via a pantoyl-adenylate intermediate. The protein is Pantothenate synthetase of Nitrosomonas europaea (strain ATCC 19718 / CIP 103999 / KCTC 2705 / NBRC 14298).